Consider the following 323-residue polypeptide: tRNA dimethylallyltransferase (323 aa).

An ATP-binding site is contributed by 21–28 (GPTACNKS). 23–28 (TACNKS) is a substrate binding site. Interaction with substrate tRNA regions lie at residues 46–49 (DSAL), 171–175 (QRVLR), and 252–257 (RCVGYR).

This sequence belongs to the IPP transferase family. In terms of assembly, monomer. It depends on Mg(2+) as a cofactor.

It carries out the reaction adenosine(37) in tRNA + dimethylallyl diphosphate = N(6)-dimethylallyladenosine(37) in tRNA + diphosphate. Its function is as follows. Catalyzes the transfer of a dimethylallyl group onto the adenine at position 37 in tRNAs that read codons beginning with uridine, leading to the formation of N6-(dimethylallyl)adenosine (i(6)A). The polypeptide is tRNA dimethylallyltransferase (Buchnera aphidicola subsp. Baizongia pistaciae (strain Bp)).